Reading from the N-terminus, the 1786-residue chain is Laminin subunit beta-1 (1786 aa).

The N-terminal stretch at 1-21 (MGLLQVFAFGVLALWGTRVCA) is a signal peptide. Positions 31–270 (AEGSCYPATG…AVYDMVVRGN (240 aa)) constitute a Laminin N-terminal domain. An N-linked (GlcNAc...) asparagine glycan is attached at N120. At S250 the chain carries Phosphoserine. 19 cysteine pairs are disulfide-bonded: C271-C280, C273-C298, C300-C309, C312-C332, C335-C344, C337-C362, C365-C374, C377-C395, C398-C411, C400-C426, C428-C437, C440-C455, C458-C472, C460-C479, C481-C490, C493-C507, C510-C522, C512-C529, and C531-C540. 4 Laminin EGF-like domains span residues 271 to 334 (CFCY…ACKK), 335 to 397 (CNCN…LCEP), 398 to 457 (CTCD…GCKS), and 458 to 509 (CACN…GCRP). The N-linked (GlcNAc...) asparagine glycan is linked to N356. The Laminin EGF-like 5; truncated domain maps to 510 to 540 (CDCDLGGALNNSCSEDSGQCSCLPHMIGRQC). N-linked (GlcNAc...) asparagine glycosylation occurs at N519. A Laminin IV type B domain is found at 549–767 (FTTLDHYIYE…IIFSISALIH (219 aa)). Residue N677 is glycosylated (N-linked (GlcNAc...) asparagine). Disulfide bonds link C773/C785, C775/C792, C794/C803, C806/C818, C821/C833, C823/C840, C842/C851, C854/C864, C867/C876, C869/C883, C886/C895, C898/C914, C917/C933, C919/C944, C946/C955, C958/C973, C976/C990, C978/C997, C1000/C1009, C1012/C1025, C1028/C1040, C1030/C1054, C1056/C1065, C1068/C1081, C1084/C1096, C1086/C1103, C1105/C1114, C1117/C1129, C1132/C1144, C1134/C1151, C1153/C1162, and C1165/C1176. Laminin EGF-like domains follow at residues 773-820 (CECD…GCKP), 821-866 (CDCH…SCQP), 867-916 (CQCN…HCRP), 917-975 (CPCP…SCQP), 976-1027 (CQCH…DCRK), 1028-1083 (CVCN…GCGP), 1084-1131 (CNCN…ECRA), and 1132-1178 (CDCD…DCTP). N1041 is a glycosylation site (N-linked (GlcNAc...) asparagine). A domain II region spans residues 1179 to 1397 (CHQCFALWDA…LDLSAVAQMT (219 aa)). 4 N-linked (GlcNAc...) asparagine glycosylation sites follow: N1195, N1279, N1336, and N1343. Positions 1216 to 1315 (YRETVDSVEK…LEFIKNSDIQ (100 aa)) form a coiled coil. Residues 1368 to 1388 (KEQQEEQARLLDELAGKLQSL) adopt a coiled-coil conformation. The tract at residues 1398 to 1430 (CGTPPGADCSESECGGPNCRTDEGEKKCGGPGC) is domain alpha. The tract at residues 1431–1786 (GGLVTVAHSA…EKVAVYSTCL (356 aa)) is domain I. Residues 1448–1778 (DRDVLSALAE…RSLLKDISEK (331 aa)) are a coiled coil. N-linked (GlcNAc...) asparagine glycosylation is present at N1487. S1496 is subject to Phosphoserine. N1542 and N1643 each carry an N-linked (GlcNAc...) asparagine glycan. Position 1666 is a phosphoserine (S1666).

As to quaternary structure, laminin is a complex glycoprotein, consisting of three different polypeptide chains (alpha, beta, gamma), which are bound to each other by disulfide bonds into a cross-shaped molecule comprising one long and three short arms with globules at each end. Beta-1 is a subunit of laminin-1 (laminin-111 or EHS laminin), laminin-2 (laminin-211 or merosin), laminin-6 (laminin-311 or K-laminin), laminin-8 (laminin-411), laminin-10 (laminin-511) and laminin-12 (laminin-213). Interacts with ITGB1. In terms of tissue distribution, widely expressed in the embryo. High levels are detected in the cerebellar basement membrane, at postnatal day 7.

The protein localises to the secreted. It localises to the extracellular space. It is found in the extracellular matrix. Its subcellular location is the basement membrane. Its function is as follows. Binding to cells via a high affinity receptor, laminin is thought to mediate the attachment, migration and organization of cells into tissues during embryonic development by interacting with other extracellular matrix components. Involved in the organization of the laminar architecture of the cerebral cortex. It is probably required for the integrity of the basement membrane/glia limitans that serves as an anchor point for the endfeet of radial glial cells and as a physical barrier to migrating neurons. Radial glial cells play a central role in cerebral cortical development, where they act both as the proliferative unit of the cerebral cortex and a scaffold for neurons migrating toward the pial surface. The chain is Laminin subunit beta-1 (Lamb1) from Mus musculus (Mouse).